The primary structure comprises 658 residues: Protein kinase and PP2C-like domain-containing protein (658 aa).

The Protein kinase domain occupies 30-314 (FTLLSPIAKG…DNVVLELESI (285 aa)). ATP is bound by residues 36–44 (IAKGSESVV) and K57. The active-site Proton acceptor is D149. Positions 392–648 (SCGSFATCGR…DNITVIVVFL (257 aa)) constitute a PPM-type phosphatase domain. The Mn(2+) site is built by D428, G429, D599, and D639.

It in the N-terminal section; belongs to the protein kinase superfamily. Ser/Thr protein kinase family. In the C-terminal section; belongs to the PP2C family. Mg(2+) is required as a cofactor. The cofactor is Mn(2+).

It carries out the reaction L-seryl-[protein] + ATP = O-phospho-L-seryl-[protein] + ADP + H(+). It catalyses the reaction L-threonyl-[protein] + ATP = O-phospho-L-threonyl-[protein] + ADP + H(+). The enzyme catalyses O-phospho-L-seryl-[protein] + H2O = L-seryl-[protein] + phosphate. The catalysed reaction is O-phospho-L-threonyl-[protein] + H2O = L-threonyl-[protein] + phosphate. The sequence is that of Protein kinase and PP2C-like domain-containing protein from Arabidopsis thaliana (Mouse-ear cress).